We begin with the raw amino-acid sequence, 408 residues long: Prenyltransferase criF (408 aa).

Dimethylallyl diphosphate-binding residues include Arg94, Lys181, Tyr183, Arg248, Lys250, Tyr252, Gln334, Tyr336, Tyr400, and Tyr404.

Belongs to the tryptophan dimethylallyltransferase family. In terms of assembly, homodimer.

The catalysed reaction is preechinulin + dimethylallyl diphosphate = tardioxopiperazine B + diphosphate. The enzyme catalyses preechinulin + dimethylallyl diphosphate = tardioxopiperazine A + diphosphate. It catalyses the reaction tardioxopiperazine A + dimethylallyl diphosphate = echinulin + diphosphate. It carries out the reaction tardioxopiperazine A + dimethylallyl diphosphate = variecolorin L + diphosphate. The catalysed reaction is neoechinulin A + dimethylallyl diphosphate = variecolorin G + diphosphate. The enzyme catalyses neoechinulin A + dimethylallyl diphosphate = isoechinulin A + diphosphate. It catalyses the reaction isoechinulin A + dimethylallyl diphosphate = dehydroechinulin + diphosphate. It carries out the reaction neoechinulin B + dimethylallyl diphosphate = isoechinulin B + diphosphate. Its pathway is secondary metabolite biosynthesis. It functions in the pathway alkaloid biosynthesis. In terms of biological role, prenyltransferase; part of the gene cluster that mediates the biosynthesis of echinulin family alkaloid. The pathway begins with the biosynthesis of the cyclic dipeptide cyclo-L-Trp-L-Ala (cyclo-TA) by the NRPS criC via condensation of L-alanine and L-tryptophan. The prenyltransferase criA then catalyzes the first prenylation step, a reverse prenylation reaction at C2, to yield preechinulin. Preechinulin is the substrate of the cytochrome P450 monooxygenase criE that catalyzes the formation of the double bond between C10 and C11 to produce neoechulin A. The unique prenyltransferase criF functions as a competitive enzyme with criE for preechinulin metabolization and uses preechinulin for effective regiospecific prenylations. Preechinulin is prenylated by criF at C5 or C7. C7-prenylation leads to accumulation of tardioxopiperazine B without further modification by criF. In contrast, the C5-prenylated tardioxopiperazine A can be prenylated again by criF, predominantly at C7 to form echinulin or less frequently at C4 to give variecolorin L. CriF also accepts neoechilunin A to produce varlecolorin G (prenylation at C5) or isoechinulin A (prenylation at C7). CriF further converts isoechinulin A into dehydroechinulin. Moreover, a yet unidentified enzyme can also convert neoechilunin A into neoechilunin B by introducing a double bond between positions C14 and C17 and thus provides a further substrate to criF for C5 and C7 prenylation. The protein is Prenyltransferase criF of Aspergillus cristatus (Chinese Fuzhuan brick tea-fermentation fungus).